A 459-amino-acid chain; its full sequence is E3 ubiquitin-protein ligase RNF14 (459 aa).

The RWD domain maps to 10–129; it reads DELLALASIY…QFLKEETLDF (120 aa). Residues 141–169 are disordered; that stretch reads SGSQPQCEPAQKHAADASGEKSKVQDLDP. A compositionally biased stretch (basic and acidic residues) spans 150–169; the sequence is AQKHAADASGEKSKVQDLDP. The interval 200-441 is TRIAD supradomain; it reads KAFCCGICYS…NPDSPCYNQL (242 aa). Residues Cys204, Cys207, Cys222, His224, Cys227, Cys230, Cys249, Cys254, Cys293, Cys298, Cys313, Cys316, Cys321, Cys324, His329, Cys334, Cys388, and Cys391 each contribute to the Zn(2+) site. 2 RING-type zinc fingers span residues 204-249 and 204-254; these read CGIC…CLNC and CGIC…EPKC. The segment at 273-334 adopts an IBR-type zinc-finger fold; sequence ARYDRLLLQS…RRSYHGLSHC (62 aa). The segment at 388–417 adopts an RING-type 2; atypical zinc-finger fold; sequence CPCCGTNIQKAHGCNKMTCSSCQKYFCWIC. Cys401 is a catalytic residue. Zn(2+)-binding residues include Cys406, Cys409, Cys414, Cys417, His429, and Cys437.

The protein belongs to the RBR family. RNF14 subfamily.

The protein resides in the cytoplasm. Its subcellular location is the nucleus. It carries out the reaction [E2 ubiquitin-conjugating enzyme]-S-ubiquitinyl-L-cysteine + [acceptor protein]-L-lysine = [E2 ubiquitin-conjugating enzyme]-L-cysteine + [acceptor protein]-N(6)-ubiquitinyl-L-lysine.. Its pathway is protein modification; protein ubiquitination. Its function is as follows. E3 ubiquitin-protein ligase that plays a key role in the RNF14-RNF25 translation quality control pathway, a pathway that takes place when a ribosome has stalled during translation, and which promotes ubiquitination and degradation of translation factors on stalled ribosomes. Recruited to stalled ribosomes by the ribosome collision sensor GCN1 and mediates 'Lys-6'-linked ubiquitination of target proteins, leading to their degradation. Mediates ubiquitination of eef1a1/eEF1A and etf1/eRF1 translation factors on stalled ribosomes, leading to their degradation. Specifically required to resolve RNA-protein cross-links caused by reactive aldehydes, which trigger translation stress by stalling ribosomes: acts by catalying 'Lys-6'-linked ubiquitination of RNA-protein cross-links, leading to their removal by the ATP-dependent unfoldase VCP and subsequent degradation by the proteasome. Independently of its function in the response to stalled ribosomes, acts as a regulator of transcription in Wnt signaling via its interaction with TCF transcription factors (tcf7/tcf1, tcf7l1/tcf3 and tcf7l2/tcf4). The polypeptide is E3 ubiquitin-protein ligase RNF14 (Danio rerio (Zebrafish)).